The primary structure comprises 276 residues: Rhomboid-type serine protease 2 (276 aa).

Transmembrane regions (helical) follow at residues 27 to 47 (LPLF…LTLV), 77 to 97 (FPFI…FTPL), 109 to 129 (TSVA…YVFV), 132 to 152 (FILH…LLLG), and 175 to 195 (WITP…SSFL). S144 (nucleophile) is an active-site residue. The active site involves H197. Residues 198 to 218 (LAGLLVGYGFGLGYLKFLAPP) traverse the membrane as a helical segment.

This sequence belongs to the peptidase S54 family.

It localises to the golgi apparatus membrane. Its subcellular location is the golgi apparatus. The protein resides in the cis-Golgi network membrane. The enzyme catalyses Cleaves type-1 transmembrane domains using a catalytic dyad composed of serine and histidine that are contributed by different transmembrane domains.. In terms of biological role, probable rhomboid-type serine protease that catalyzes intramembrane proteolysis. In Neurospora crassa (strain ATCC 24698 / 74-OR23-1A / CBS 708.71 / DSM 1257 / FGSC 987), this protein is Rhomboid-type serine protease 2 (rbd-2).